An 87-amino-acid chain; its full sequence is DNA-directed RNA polymerase subunit omega (87 aa).

Belongs to the RNA polymerase subunit omega family. As to quaternary structure, the RNAP catalytic core consists of 2 alpha, 1 beta, 1 beta' and 1 omega subunit. When a sigma factor is associated with the core the holoenzyme is formed, which can initiate transcription.

It carries out the reaction RNA(n) + a ribonucleoside 5'-triphosphate = RNA(n+1) + diphosphate. Promotes RNA polymerase assembly. Latches the N- and C-terminal regions of the beta' subunit thereby facilitating its interaction with the beta and alpha subunits. This chain is DNA-directed RNA polymerase subunit omega, found in Pseudomonas putida (strain W619).